The primary structure comprises 369 residues: 5-amino-6-(D-ribitylamino)uracil--L-tyrosine 4-hydroxyphenyl transferase (369 aa).

In terms of domain architecture, Radical SAM core spans 56–292; sequence VTFVVNRNIN…AVARLYFGPL (237 aa). Cys-70, Cys-74, and Cys-77 together coordinate [4Fe-4S] cluster.

It belongs to the radical SAM superfamily. CofH family. Consists of two subunits, CofG and CofH. [4Fe-4S] cluster is required as a cofactor.

The enzyme catalyses 5-amino-6-(D-ribitylamino)uracil + L-tyrosine + S-adenosyl-L-methionine = 5-amino-5-(4-hydroxybenzyl)-6-(D-ribitylimino)-5,6-dihydrouracil + 2-iminoacetate + 5'-deoxyadenosine + L-methionine + H(+). It participates in cofactor biosynthesis; coenzyme F0 biosynthesis. Catalyzes the radical-mediated synthesis of 5-amino-5-(4-hydroxybenzyl)-6-(D-ribitylimino)-5,6-dihydrouracil from 5-amino-6-(D-ribitylamino)uracil and L-tyrosine. The polypeptide is 5-amino-6-(D-ribitylamino)uracil--L-tyrosine 4-hydroxyphenyl transferase (Methanopyrus kandleri (strain AV19 / DSM 6324 / JCM 9639 / NBRC 100938)).